A 187-amino-acid chain; its full sequence is ATP synthase subunit b, chloroplastic (187 aa).

The chain crosses the membrane as a helical span at residues 34-56 (IINLSVVLGLVFTLGRNFLISLL).

Belongs to the ATPase B chain family. F-type ATPases have 2 components, F(1) - the catalytic core - and F(0) - the membrane proton channel. F(1) has five subunits: alpha(3), beta(3), gamma(1), delta(1), epsilon(1). F(0) has four main subunits: a(1), b(1), b'(1) and c(10-14). The alpha and beta chains form an alternating ring which encloses part of the gamma chain. F(1) is attached to F(0) by a central stalk formed by the gamma and epsilon chains, while a peripheral stalk is formed by the delta, b and b' chains.

It localises to the plastid. The protein localises to the chloroplast thylakoid membrane. In terms of biological role, f(1)F(0) ATP synthase produces ATP from ADP in the presence of a proton or sodium gradient. F-type ATPases consist of two structural domains, F(1) containing the extramembraneous catalytic core and F(0) containing the membrane proton channel, linked together by a central stalk and a peripheral stalk. During catalysis, ATP synthesis in the catalytic domain of F(1) is coupled via a rotary mechanism of the central stalk subunits to proton translocation. Functionally, component of the F(0) channel, it forms part of the peripheral stalk, linking F(1) to F(0). This is ATP synthase subunit b, chloroplastic from Pleurastrum terricola (Filamentous green alga).